The chain runs to 363 residues: Sulfate/thiosulfate import ATP-binding protein CysA (363 aa).

The 235-residue stretch at 3-237 (IEINNISKYF…PATRFVLEFL (235 aa)) folds into the ABC transporter domain. 35-42 (GPSGSGKT) provides a ligand contact to ATP.

Belongs to the ABC transporter superfamily. Sulfate/tungstate importer (TC 3.A.1.6) family. The complex is composed of two ATP-binding proteins (CysA), two transmembrane proteins (CysT and CysW) and a solute-binding protein (CysP).

Its subcellular location is the cell inner membrane. The enzyme catalyses sulfate(out) + ATP + H2O = sulfate(in) + ADP + phosphate + H(+). It carries out the reaction thiosulfate(out) + ATP + H2O = thiosulfate(in) + ADP + phosphate + H(+). In terms of biological role, part of the ABC transporter complex CysAWTP involved in sulfate/thiosulfate import. Responsible for energy coupling to the transport system. The polypeptide is Sulfate/thiosulfate import ATP-binding protein CysA (Yersinia pestis).